We begin with the raw amino-acid sequence, 280 residues long: 2-C-methyl-D-erythritol 4-phosphate cytidylyltransferase (280 aa).

This sequence belongs to the IspD/TarI cytidylyltransferase family. IspD subfamily.

It catalyses the reaction 2-C-methyl-D-erythritol 4-phosphate + CTP + H(+) = 4-CDP-2-C-methyl-D-erythritol + diphosphate. The protein operates within isoprenoid biosynthesis; isopentenyl diphosphate biosynthesis via DXP pathway; isopentenyl diphosphate from 1-deoxy-D-xylulose 5-phosphate: step 2/6. In terms of biological role, catalyzes the formation of 4-diphosphocytidyl-2-C-methyl-D-erythritol from CTP and 2-C-methyl-D-erythritol 4-phosphate (MEP). This Psychrobacter cryohalolentis (strain ATCC BAA-1226 / DSM 17306 / VKM B-2378 / K5) protein is 2-C-methyl-D-erythritol 4-phosphate cytidylyltransferase.